A 658-amino-acid polypeptide reads, in one-letter code: Translation factor GUF1, mitochondrial (658 aa).

The N-terminal 40 residues, 1-40 (MRGCLQTVRWLTSAWQRPPSYPPLSRAAPCRFFNVSIPRN), are a transit peptide targeting the mitochondrion. Residues 60–240 (DRFRNFCIVA…TVVEQIPAPV (181 aa)) enclose the tr-type G domain. Residues 69–76 (AHVDHGKS), 133–137 (DTPGH), and 187–190 (NKVD) contribute to the GTP site.

The protein belongs to the TRAFAC class translation factor GTPase superfamily. Classic translation factor GTPase family. LepA subfamily.

The protein localises to the mitochondrion inner membrane. It carries out the reaction GTP + H2O = GDP + phosphate + H(+). Functionally, promotes mitochondrial protein synthesis. May act as a fidelity factor of the translation reaction, by catalyzing a one-codon backward translocation of tRNAs on improperly translocated ribosomes. Binds to mitochondrial ribosomes in a GTP-dependent manner. This is Translation factor GUF1, mitochondrial from Paracoccidioides brasiliensis (strain Pb18).